Reading from the N-terminus, the 435-residue chain is Endoglucanase EG-1 (435 aa).

Residues 1–20 (MARGTALLGLTSLLLGLVNG) form the signal peptide. Gln21 carries the pyrrolidone carboxylic acid modification. Disulfide bonds link Cys38–Cys44, Cys71–Cys93, and Cys83–Cys89. Asn109 carries N-linked (GlcNAc...) asparagine glycosylation. 6 cysteine pairs are disulfide-bonded: Cys160-Cys385, Cys192-Cys215, Cys196-Cys214, Cys235-Cys254, Cys243-Cys248, and Cys259-Cys335. The Nucleophile role is filled by Glu217. Glu222 (proton donor) is an active-site residue. A glycan (N-linked (GlcNAc...) asparagine) is linked at Asn267.

This sequence belongs to the glycosyl hydrolase 7 (cellulase C) family.

It localises to the secreted. It catalyses the reaction Endohydrolysis of (1-&gt;4)-beta-D-glucosidic linkages in cellulose, lichenin and cereal beta-D-glucans.. Its function is as follows. The biological conversion of cellulose to glucose generally requires three types of hydrolytic enzymes: (1) Endoglucanases which cut internal beta-1,4-glucosidic bonds; (2) Exocellobiohydrolases that cut the disaccharide cellobiose from the non-reducing end of the cellulose polymer chain; (3) Beta-1,4-glucosidases which hydrolyze the cellobiose and other short cello-oligosaccharides to glucose. The sequence is that of Endoglucanase EG-1 (EG-1) from Humicola insolens (Soft-rot fungus).